A 313-amino-acid chain; its full sequence is Putative S-adenosyl-L-methionine-dependent methyltransferase MAP_4064c (313 aa).

Residues Asp129 and 158–159 (DL) each bind S-adenosyl-L-methionine.

This sequence belongs to the UPF0677 family.

Its function is as follows. Exhibits S-adenosyl-L-methionine-dependent methyltransferase activity. The polypeptide is Putative S-adenosyl-L-methionine-dependent methyltransferase MAP_4064c (Mycolicibacterium paratuberculosis (strain ATCC BAA-968 / K-10) (Mycobacterium paratuberculosis)).